A 196-amino-acid polypeptide reads, in one-letter code: Ribosome maturation factor RimP (196 aa).

Positions 163 to 196 (GLAPSKPTGPAPKRPKPNTNSSSNEPAAKKPRAE) are disordered.

It belongs to the RimP family.

It localises to the cytoplasm. In terms of biological role, required for maturation of 30S ribosomal subunits. The polypeptide is Ribosome maturation factor RimP (Stenotrophomonas maltophilia (strain K279a)).